The following is a 186-amino-acid chain: Elongation factor P (186 aa).

This sequence belongs to the elongation factor P family.

It is found in the cytoplasm. It participates in protein biosynthesis; polypeptide chain elongation. In terms of biological role, involved in peptide bond synthesis. Stimulates efficient translation and peptide-bond synthesis on native or reconstituted 70S ribosomes in vitro. Probably functions indirectly by altering the affinity of the ribosome for aminoacyl-tRNA, thus increasing their reactivity as acceptors for peptidyl transferase. This is Elongation factor P from Shewanella frigidimarina (strain NCIMB 400).